A 447-amino-acid chain; its full sequence is NADP-specific glutamate dehydrogenase (447 aa).

Positions 92, 113, and 116 each coordinate substrate. Residue Lys128 is the Proton donor of the active site. Gly167 is a binding site for substrate. The NADP(+) site is built by Thr212 and Asn243. A substrate-binding site is contributed by Ser379.

The protein belongs to the Glu/Leu/Phe/Val dehydrogenases family. In terms of assembly, homohexamer.

The enzyme catalyses L-glutamate + NADP(+) + H2O = 2-oxoglutarate + NH4(+) + NADPH + H(+). Its function is as follows. Catalyzes the reversible oxidative deamination of glutamate to alpha-ketoglutarate and ammonia. In Corynebacterium efficiens (strain DSM 44549 / YS-314 / AJ 12310 / JCM 11189 / NBRC 100395), this protein is NADP-specific glutamate dehydrogenase (gdh).